A 298-amino-acid chain; its full sequence is Glycine--tRNA ligase alpha subunit (298 aa).

The protein belongs to the class-II aminoacyl-tRNA synthetase family. In terms of assembly, tetramer of two alpha and two beta subunits.

The protein resides in the cytoplasm. It carries out the reaction tRNA(Gly) + glycine + ATP = glycyl-tRNA(Gly) + AMP + diphosphate. The protein is Glycine--tRNA ligase alpha subunit of Helicobacter pylori (strain Shi470).